Reading from the N-terminus, the 86-residue chain is Putative defensin-like protein 244 (86 aa).

A signal peptide spans 1–22 (MKGIAMLLVSCLLFSFLSTNLA). Intrachain disulfides connect C28–C83, C38–C67, C48–C77, and C65–C79.

This sequence belongs to the DEFL family.

It is found in the secreted. The polypeptide is Putative defensin-like protein 244 (SCRL11) (Arabidopsis thaliana (Mouse-ear cress)).